The primary structure comprises 289 residues: Ribosomal protein L11 methyltransferase (289 aa).

Positions 135, 156, 179, and 225 each coordinate S-adenosyl-L-methionine.

Belongs to the methyltransferase superfamily. PrmA family.

The protein localises to the cytoplasm. The enzyme catalyses L-lysyl-[protein] + 3 S-adenosyl-L-methionine = N(6),N(6),N(6)-trimethyl-L-lysyl-[protein] + 3 S-adenosyl-L-homocysteine + 3 H(+). Its function is as follows. Methylates ribosomal protein L11. The protein is Ribosomal protein L11 methyltransferase of Chlorobaculum parvum (strain DSM 263 / NCIMB 8327) (Chlorobium vibrioforme subsp. thiosulfatophilum).